The primary structure comprises 330 residues: UPF0324 membrane protein PG_2004 (330 aa).

9 helical membrane-spanning segments follow: residues Ile-13 to Val-31, Pro-36 to Gly-58, Val-71 to Gly-93, Met-97 to Ile-114, Ser-126 to Leu-148, Ala-158 to Leu-180, Val-248 to Phe-270, Leu-285 to Arg-307, and Gly-312 to Leu-329.

This sequence belongs to the UPF0324 family.

Its subcellular location is the cell membrane. The polypeptide is UPF0324 membrane protein PG_2004 (Porphyromonas gingivalis (strain ATCC BAA-308 / W83)).